A 322-amino-acid chain; its full sequence is Probable ethanolamine-phosphate cytidylyltransferase (322 aa).

The protein belongs to the cytidylyltransferase family.

It carries out the reaction phosphoethanolamine + CTP + H(+) = CDP-ethanolamine + diphosphate. The protein operates within phospholipid metabolism; phosphatidylethanolamine biosynthesis; phosphatidylethanolamine from ethanolamine: step 2/3. In Encephalitozoon cuniculi (strain GB-M1) (Microsporidian parasite), this protein is Probable ethanolamine-phosphate cytidylyltransferase (MUQ1).